We begin with the raw amino-acid sequence, 65 residues long: uncharacterized protein (65 aa).

The tract at residues 1 to 30 (MPAASLESLLPPPPGKLPSPPLRPHGKFQR) is disordered. The segment covering 10 to 23 (LPPPPGKLPSPPLR) has biased composition (pro residues).

This is an uncharacterized protein from Homo sapiens (Human).